The following is a 773-amino-acid chain: Lon protease homolog 2, peroxisomal (773 aa).

The Lon N-terminal domain maps to 9–198 (LPVIVVDSGV…MCEKWMQMQR (190 aa)). 336–343 (GPPGIGKT) provides a ligand contact to ATP. Residues 587 to 766 (PLPPGVCFGL…EDVIEAMMEK (180 aa)) form the Lon proteolytic domain. Residues Ser-672 and Lys-715 contribute to the active site. Positions 771–773 (AKL) match the Microbody targeting signal motif.

It belongs to the peptidase S16 family.

The protein resides in the peroxisome matrix. It catalyses the reaction Hydrolysis of proteins in presence of ATP.. Its function is as follows. ATP-dependent serine protease that mediates the selective degradation of misfolded and unassembled polypeptides in the peroxisomal matrix. Necessary for type 2 peroxisome targeting signal (PTS2)-containing protein processing and facilitates peroxisome matrix protein import. In Caenorhabditis briggsae, this protein is Lon protease homolog 2, peroxisomal.